The primary structure comprises 361 residues: Peptide chain release factor 1 (361 aa).

Q235 carries the post-translational modification N5-methylglutamine.

Belongs to the prokaryotic/mitochondrial release factor family. Methylated by PrmC. Methylation increases the termination efficiency of RF1.

The protein resides in the cytoplasm. Functionally, peptide chain release factor 1 directs the termination of translation in response to the peptide chain termination codons UAG and UAA. The sequence is that of Peptide chain release factor 1 from Buchnera aphidicola subsp. Schizaphis graminum (strain Sg).